We begin with the raw amino-acid sequence, 858 residues long: GDP-fucose protein O-fucosyltransferase 2 (858 aa).

Residues 1-150 are Cytoplasmic-facing; it reads MHCQLGGQAR…RPPCLLNHRR (150 aa). Residues 151–171 traverse the membrane as a helical; Signal-anchor for type II membrane protein segment; sequence LLLGLVSVLTVFLSCLPFTNA. Residues 172–858 are Lumenal-facing; that stretch reads TVSPAALQDV…WPSLDPSSTL (687 aa). GDP-beta-L-fucose is bound at residue 237 to 241; sequence GEGFH. The active-site Proton acceptor is the Glu238. The disordered stretch occupies residues 448 to 510; sequence AALTPQERQR…SRSRKEIQEE (63 aa). The span at 486–510 shows a compositional bias: basic and acidic residues; it reads DGEREKRKPGRRSDTSRSRKEIQEE. Residues 646–648 and 787–788 each bind GDP-beta-L-fucose; these read HLR and RF. A disordered region spans residues 819–858; sequence TGGQAQGKCFATKSHDPPEGRSRSELRRKYWPSLDPSSTL. The span at 831-846 shows a compositional bias: basic and acidic residues; sequence KSHDPPEGRSRSELRR.

It belongs to the glycosyltransferase 68 family.

Its subcellular location is the endoplasmic reticulum membrane. The enzyme catalyses L-seryl-[protein] + GDP-beta-L-fucose = 3-O-(alpha-L-fucosyl)-L-seryl-[protein] + GDP + H(+). The catalysed reaction is L-threonyl-[protein] + GDP-beta-L-fucose = 3-O-(alpha-L-fucosyl)-L-threonyl-[protein] + GDP + H(+). The protein operates within protein modification; protein glycosylation. Catalyzes the reaction that attaches fucose through an O-glycosidic linkage to a conserved serine or threonine residue in the consensus sequence C1-X-X-S/T-C2 of thrombospondin type I repeats (TSRs) where C1 and C2 are the first and second cysteines of the repeat, respectively. O-fucosylates microneme protein MIC2 and may play a role in its stabilization. Probably by regulating protein O-fucosylation, may play a role in tachyzoite adhesion to and/or invasion of host cells; however, POFUT2 involvement in adhesion/invasion is controversial. The polypeptide is GDP-fucose protein O-fucosyltransferase 2 (Toxoplasma gondii (strain ATCC 50853 / GT1)).